We begin with the raw amino-acid sequence, 259 residues long: Type III pantothenate kinase (259 aa).

ATP is bound at residue 6 to 13 (DAGNTNIV). Residues tyrosine 100 and 107 to 110 (GADR) each bind substrate. Aspartate 109 serves as the catalytic Proton acceptor. Position 129 (aspartate 129) interacts with K(+). Threonine 132 is a binding site for ATP. Threonine 184 contacts substrate.

It belongs to the type III pantothenate kinase family. As to quaternary structure, homodimer. NH4(+) serves as cofactor. The cofactor is K(+).

It localises to the cytoplasm. The enzyme catalyses (R)-pantothenate + ATP = (R)-4'-phosphopantothenate + ADP + H(+). Its pathway is cofactor biosynthesis; coenzyme A biosynthesis; CoA from (R)-pantothenate: step 1/5. In terms of biological role, catalyzes the phosphorylation of pantothenate (Pan), the first step in CoA biosynthesis. This is Type III pantothenate kinase from Clostridium novyi (strain NT).